The sequence spans 227 residues: Cytochrome c oxidase subunit 2 (227 aa).

Residues 1 to 14 (MAHAAQVGLQDATS) are Mitochondrial intermembrane-facing. Residues 15–45 (PIMEELIIFHDHALMIIFLICFLVLYALFLT) traverse the membrane as a helical segment. The Mitochondrial matrix segment spans residues 46–59 (LTTKLTNTSISDAQ). A helical transmembrane segment spans residues 60–87 (EMETVWTILPAIILVLIALPSLRILYMT). At 88–227 (DEVNDPSFTI…IFEMGPVFTL (140 aa)) the chain is on the mitochondrial intermembrane side. Histidine 161, cysteine 196, glutamate 198, cysteine 200, histidine 204, and methionine 207 together coordinate Cu cation. Glutamate 198 is a binding site for Mg(2+).

It belongs to the cytochrome c oxidase subunit 2 family. In terms of assembly, component of the cytochrome c oxidase (complex IV, CIV), a multisubunit enzyme composed of 14 subunits. The complex is composed of a catalytic core of 3 subunits MT-CO1, MT-CO2 and MT-CO3, encoded in the mitochondrial DNA, and 11 supernumerary subunits COX4I, COX5A, COX5B, COX6A, COX6B, COX6C, COX7A, COX7B, COX7C, COX8 and NDUFA4, which are encoded in the nuclear genome. The complex exists as a monomer or a dimer and forms supercomplexes (SCs) in the inner mitochondrial membrane with NADH-ubiquinone oxidoreductase (complex I, CI) and ubiquinol-cytochrome c oxidoreductase (cytochrome b-c1 complex, complex III, CIII), resulting in different assemblies (supercomplex SCI(1)III(2)IV(1) and megacomplex MCI(2)III(2)IV(2)). Found in a complex with TMEM177, COA6, COX18, COX20, SCO1 and SCO2. Interacts with TMEM177 in a COX20-dependent manner. Interacts with COX20. Interacts with COX16. Requires Cu cation as cofactor.

The protein resides in the mitochondrion inner membrane. It catalyses the reaction 4 Fe(II)-[cytochrome c] + O2 + 8 H(+)(in) = 4 Fe(III)-[cytochrome c] + 2 H2O + 4 H(+)(out). Component of the cytochrome c oxidase, the last enzyme in the mitochondrial electron transport chain which drives oxidative phosphorylation. The respiratory chain contains 3 multisubunit complexes succinate dehydrogenase (complex II, CII), ubiquinol-cytochrome c oxidoreductase (cytochrome b-c1 complex, complex III, CIII) and cytochrome c oxidase (complex IV, CIV), that cooperate to transfer electrons derived from NADH and succinate to molecular oxygen, creating an electrochemical gradient over the inner membrane that drives transmembrane transport and the ATP synthase. Cytochrome c oxidase is the component of the respiratory chain that catalyzes the reduction of oxygen to water. Electrons originating from reduced cytochrome c in the intermembrane space (IMS) are transferred via the dinuclear copper A center (CU(A)) of subunit 2 and heme A of subunit 1 to the active site in subunit 1, a binuclear center (BNC) formed by heme A3 and copper B (CU(B)). The BNC reduces molecular oxygen to 2 water molecules using 4 electrons from cytochrome c in the IMS and 4 protons from the mitochondrial matrix. This Pan paniscus (Pygmy chimpanzee) protein is Cytochrome c oxidase subunit 2 (MT-CO2).